We begin with the raw amino-acid sequence, 206 residues long: Crossover junction endodeoxyribonuclease RuvC (206 aa).

Catalysis depends on residues D7, E67, and D138. Positions 7, 67, and 138 each coordinate Mg(2+).

The protein belongs to the RuvC family. As to quaternary structure, homodimer which binds Holliday junction (HJ) DNA. The HJ becomes 2-fold symmetrical on binding to RuvC with unstacked arms; it has a different conformation from HJ DNA in complex with RuvA. In the full resolvosome a probable DNA-RuvA(4)-RuvB(12)-RuvC(2) complex forms which resolves the HJ. Mg(2+) serves as cofactor.

It is found in the cytoplasm. The enzyme catalyses Endonucleolytic cleavage at a junction such as a reciprocal single-stranded crossover between two homologous DNA duplexes (Holliday junction).. Functionally, the RuvA-RuvB-RuvC complex processes Holliday junction (HJ) DNA during genetic recombination and DNA repair. Endonuclease that resolves HJ intermediates. Cleaves cruciform DNA by making single-stranded nicks across the HJ at symmetrical positions within the homologous arms, yielding a 5'-phosphate and a 3'-hydroxyl group; requires a central core of homology in the junction. The consensus cleavage sequence is 5'-(A/T)TT(C/G)-3'. Cleavage occurs on the 3'-side of the TT dinucleotide at the point of strand exchange. HJ branch migration catalyzed by RuvA-RuvB allows RuvC to scan DNA until it finds its consensus sequence, where it cleaves and resolves the cruciform DNA. In Anaeromyxobacter sp. (strain Fw109-5), this protein is Crossover junction endodeoxyribonuclease RuvC.